Reading from the N-terminus, the 811-residue chain is RFX-like DNA-binding protein RFX1 (811 aa).

Disordered regions lie at residues 48–92 (EPTS…TYLP) and 111–156 (LLHQ…QRQP). A compositionally biased stretch (low complexity) spans 51–70 (SRGSNDNSNGPSNGSSVNSN). Over residues 140–149 (SPTPTQPPAQ) the composition is skewed to pro residues. At serine 173 the chain carries Phosphoserine. The tract at residues 181 to 222 (KSEETLNNNPPTAAKRTNTFPSIPSSTKKQKTSQEKRISSIS) is disordered. The segment covering 185–204 (TLNNNPPTAAKRTNTFPSIP) has biased composition (polar residues). The segment at residues 285–360 (ALLWLMKNCK…YHYCGLKLTV (76 aa)) is a DNA-binding region (RFX-type winged-helix). The span at 377–391 (LVHNNDPISPLSSPS) shows a compositional bias: low complexity. The disordered stretch occupies residues 377-461 (LVHNNDPISP…AANNPTGTLS (85 aa)). A compositionally biased stretch (polar residues) spans 409–428 (NRKSLSRTGSPVKQSSNDNP). The span at 434 to 445 (ESQHPNETEANK) shows a compositional bias: basic and acidic residues.

The protein belongs to the RFX family.

The protein is RFX-like DNA-binding protein RFX1 (RFX1) of Saccharomyces cerevisiae (strain ATCC 204508 / S288c) (Baker's yeast).